The sequence spans 207 residues: uncharacterized protein (207 aa).

The protein belongs to the methyltransferase superfamily.

This is an uncharacterized protein from Escherichia coli (strain K12).